The sequence spans 258 residues: Countin-1 (258 aa).

Positions 1–21 (MNKLFSLILALFLVNSAVVSS) are cleaved as a signal peptide. The Saposin B-type domain occupies 22-106 (LDSCSICVDF…EKISVCKTND (85 aa)). 3 cysteine pairs are disulfide-bonded: cysteine 25–cysteine 102, cysteine 28–cysteine 96, and cysteine 56–cysteine 69. 2 N-linked (GlcNAc...) asparagine glycosylation sites follow: asparagine 121 and asparagine 215. Residues 233–248 (AGSFSGSSQSTQTGAA) are compositionally biased toward low complexity. The tract at residues 233–258 (AGSFSGSSQSTQTGAASGSGSGFALF) is disordered. Residues 249-258 (SGSGSGFALF) are compositionally biased toward gly residues.

It belongs to the countin family. Component of the counting factor (CF) complex, which includes cf60, cf50, cf45-1 and ctnA.

Its subcellular location is the secreted. Functionally, cell-counting factor that limits the maximum size of the multicellular structure. May down-regulate the expression of gp24, which mediates cell adhesion. The chain is Countin-1 (ctnA) from Dictyostelium discoideum (Social amoeba).